Here is a 104-residue protein sequence, read N- to C-terminus: Glutaredoxin (104 aa).

Residues 3-103 (MIKAQELVSS…PLLTEAGAVK (101 aa)) enclose the Glutaredoxin domain. A disulfide bond links cysteine 23 and cysteine 26.

Belongs to the glutaredoxin family. CPYC subfamily.

It is found in the cytoplasm. Its function is as follows. Has a glutathione-disulfide oxidoreductase activity in the presence of NADPH and glutathione reductase. Reduces low molecular weight disulfides and proteins. This chain is Glutaredoxin, found in Vernicia fordii (Tung).